The sequence spans 117 residues: Large ribosomal subunit protein bL17 (117 aa).

The protein belongs to the bacterial ribosomal protein bL17 family. As to quaternary structure, part of the 50S ribosomal subunit. Contacts protein L32.

The protein is Large ribosomal subunit protein bL17 of Neorickettsia sennetsu (strain ATCC VR-367 / Miyayama) (Ehrlichia sennetsu).